Reading from the N-terminus, the 226-residue chain is MILIEHILGNVKKDPVWQAKLKNATVDLLVLDQREAQKSRCRKSTLQGLDLGISLDRHVVLADGDVLTWDEESNVAVVVQIHLRDVMVIDLSELKNRSADELIKTCFELGHALGNQHWKAVTKNNEVYVPLTVATTMMDSVMRTHGFQHLPFRFVKGAEILPLLTNSEARLLFGGAEDTDTHVHVASPLDEPHGSGLHIHSIHSHGDGHSHDHDHSHGDHDSDHKH.

Residues 192 to 226 (PHGSGLHIHSIHSHGDGHSHDHDHSHGDHDSDHKH) are disordered. A compositionally biased stretch (basic and acidic residues) spans 204-226 (SHGDGHSHDHDHSHGDHDSDHKH).

It belongs to the UreE family.

The protein resides in the cytoplasm. Functionally, involved in urease metallocenter assembly. Binds nickel. Probably functions as a nickel donor during metallocenter assembly. The chain is Urease accessory protein UreE from Yersinia intermedia.